The primary structure comprises 946 residues: Atos homolog protein A (946 aa).

Positions 24–32 are transactivation domain 1 (TAD1); it reads ALLITEGRT. The segment covering 34-43 has biased composition (basic and acidic residues); that stretch reads EHSVKGRTEG. Disordered regions lie at residues 34–58, 246–271, 484–524, and 547–567; these read EHSV…APNK, SVTQ…FTKP, FQSS…TGNQ, and SCTD…SQKV. 2 stretches are compositionally biased toward polar residues: residues 247 to 267 and 484 to 500; these read VTQP…SQHA and FQSS…NENI. Composition is skewed to basic and acidic residues over residues 503–517 and 547–560; these read LPEK…HGEI and SCTD…KDNP. The segment at 749-806 is required for macropage invasion; the sequence is LLGNFEESVLNYRFEPLGVVEGFTAEVGASGIFCPTHMTLPVKVSFYSVSDDNAPSPY. The transactivation domain 2 (TAD2) stretch occupies residues 833 to 841; it reads FNPNKTVVK.

The protein belongs to the ATOS family.

It localises to the nucleus. Its function is as follows. Transcription regulator that syncronizes transcriptional and translational programs to promote macrophage invasion of tissues. The sequence is that of Atos homolog protein A (atosa) from Xenopus tropicalis (Western clawed frog).